Consider the following 810-residue polypeptide: Janus kinase and microtubule-interacting protein 2 (810 aa).

Coiled-coil stretches lie at residues 13–102 (EALI…EMSR), 148–178 (ERLKLLQEIADLKTAKKQVDEALSNMIQADK), and 207–244 (RRLMDEIKAKDRIIFSLEKELETQTGYVQKLQLQKEAL). A compositionally biased stretch (basic and acidic residues) spans 261-274 (PKREIPGRAGDGSE). Disordered regions lie at residues 261-280 (PKREIPGRAGDGSEHCSSPD) and 437-465 (YDEDSMDSETSSMASFRTDRTPATPDDDL). A coiled-coil region spans residues 280–419 (DLRRNQKRIA…REKLIRRRKH (140 aa)). Coiled coils occupy residues 468 to 597 (SLAA…RERR) and 664 to 808 (EKWI…SNRK).

The protein belongs to the JAKMIP family. As to expression, highly expressed in brain, moderately expressed in thymus, spleen and lung, and weakly expressed in kidney, liver and peripheral blood lymphocytes. Also expressed in adrenal and pituitary glands, as well as testis.

Its subcellular location is the golgi apparatus. This chain is Janus kinase and microtubule-interacting protein 2 (JAKMIP2), found in Homo sapiens (Human).